The sequence spans 102 residues: UPF0751 protein Dhaf_1351 (102 aa).

This sequence belongs to the UPF0751 family.

The protein is UPF0751 protein Dhaf_1351 of Desulfitobacterium hafniense (strain DSM 10664 / DCB-2).